Consider the following 594-residue polypeptide: Probable translation initiation factor IF-2 (594 aa).

The tr-type G domain maps to 3 to 220; the sequence is IRSPIVSVLG…MLMGLAQQYL (218 aa). Positions 12-19 are G1; that stretch reads GHVDHGKT. Residue 12 to 19 coordinates GTP; that stretch reads GHVDHGKT. The interval 37 to 41 is G2; sequence GITQH. Residues 76 to 79 form a G3 region; sequence DTPG. Residues 76-80 and 130-133 contribute to the GTP site; these read DTPGH and NKID. The G4 stretch occupies residues 130–133; the sequence is NKID. Residues 198 to 200 form a G5 region; sequence SAI.

It belongs to the TRAFAC class translation factor GTPase superfamily. Classic translation factor GTPase family. IF-2 subfamily.

In terms of biological role, function in general translation initiation by promoting the binding of the formylmethionine-tRNA to ribosomes. Seems to function along with eIF-2. This Methanothermobacter thermautotrophicus (strain ATCC 29096 / DSM 1053 / JCM 10044 / NBRC 100330 / Delta H) (Methanobacterium thermoautotrophicum) protein is Probable translation initiation factor IF-2 (infB).